A 268-amino-acid polypeptide reads, in one-letter code: Zinc finger protein SNAI2 (268 aa).

Residues 1–20 are SNAG domain; it reads MPRSFLVKKHFNASKKPNYS. A disordered region spans residues 80-117; that stretch reads SSSLGRVSPPPPSDTSSKDHSGSESPISDEEERLQSKL. C2H2-type zinc fingers lie at residues 128–150, 159–181, 185–207, and 213–235; these read FQCNLCNKTYSTFSGLAKHKQLH, FSCKYCDKEYVSLGALKMHIRTH, CVCKICGKAFSRPWLLQGHIRTH, and FSCPHCNRAFADRSNLRAHLQTH. A C2H2-type 5; atypical zinc finger spans residues 241 to 264; sequence YQCKNCSKTFSRMSLLHKHEESGC.

This sequence belongs to the snail C2H2-type zinc-finger protein family. In terms of assembly, interacts (via SNAG domain) with LIMD1 (via LIM domains), WTIP (via LIM domains) and AJUBA (via LIM domains). Interacts (via zinc fingers) with KPNA2, KPNB1, and TNPO1. May interact (via zinc fingers) with IPO7. Phosphorylated by GSK3B. Once phosphorylated, it becomes a target for ubiquitination. Post-translationally, ubiquitinated by the SCF(FBXO11) complex; ubiquitination requires previous GSK3B-mediated SNAI2 phosphorylation. In terms of tissue distribution, expressed in most adult human tissues, including spleen, thymus, prostate, testis, ovary, small intestine, colon, heart, brain, placenta, lung, liver, skeletal muscle, kidney and pancreas. Not detected in peripheral blood leukocyte. Expressed in the dermis and in all layers of the epidermis, with high levels of expression in the basal layers (at protein level). Expressed in osteoblasts (at protein level). Expressed in mesenchymal stem cells (at protein level). Expressed in breast tumor cells (at protein level).

It is found in the nucleus. Its subcellular location is the cytoplasm. In terms of biological role, transcriptional repressor that modulates both activator-dependent and basal transcription. Involved in the generation and migration of neural crest cells. Plays a role in mediating RAF1-induced transcriptional repression of the TJ protein, occludin (OCLN) and subsequent oncogenic transformation of epithelial cells. Represses BRCA2 expression by binding to its E2-box-containing silencer and recruiting CTBP1 and HDAC1 in breast cells. In epidermal keratinocytes, binds to the E-box in ITGA3 promoter and represses its transcription. Involved in the regulation of ITGB1 and ITGB4 expression and cell adhesion and proliferation in epidermal keratinocytes. Binds to E-box2 domain of BSG and activates its expression during TGFB1-induced epithelial-mesenchymal transition (EMT) in hepatocytes. Represses E-Cadherin/CDH1 transcription via E-box elements. Involved in osteoblast maturation. Binds to RUNX2 and SOC9 promoters and may act as a positive and negative transcription regulator, respectively, in osteoblasts. Binds to CXCL12 promoter via E-box regions in mesenchymal stem cells and osteoblasts. Plays an essential role in TWIST1-induced EMT and its ability to promote invasion and metastasis. This is Zinc finger protein SNAI2 (SNAI2) from Homo sapiens (Human).